Here is a 455-residue protein sequence, read N- to C-terminus: UDP-N-acetylmuramoylalanine--D-glutamate ligase (455 aa).

118–124 (GTNGKST) contributes to the ATP binding site.

This sequence belongs to the MurCDEF family.

It localises to the cytoplasm. It carries out the reaction UDP-N-acetyl-alpha-D-muramoyl-L-alanine + D-glutamate + ATP = UDP-N-acetyl-alpha-D-muramoyl-L-alanyl-D-glutamate + ADP + phosphate + H(+). It participates in cell wall biogenesis; peptidoglycan biosynthesis. Its function is as follows. Cell wall formation. Catalyzes the addition of glutamate to the nucleotide precursor UDP-N-acetylmuramoyl-L-alanine (UMA). This Myxococcus xanthus (strain DK1622) protein is UDP-N-acetylmuramoylalanine--D-glutamate ligase.